A 502-amino-acid polypeptide reads, in one-letter code: Keratin, type II cytoskeletal 8 (502 aa).

Positions 1–98 (MSVRSTKVTY…DPSIQQVRTE (98 aa)) are head. 4 positions are modified to phosphoserine: S13, S26, S37, and S40. A coil 1A region spans residues 99-134 (EKEQIKTLNNKFASFIDKVRFLEQQNKMLETKWNLL). An IF rod domain is found at 99–410 (EKEQIKTLNN…KLLEGEESRL (312 aa)). The segment at 135–151 (QNQKTTRSNMDGMFEAY) is linker 1. A coil 1B region spans residues 152–243 (ISNLRRQLDG…QLYEEELREM (92 aa)). The segment at 244–267 (QSQISDTSVVLSMDNNRSLDLDGI) is linker 12. The tract at residues 268 to 406 (IAEVRAQYED…ATYRKLLEGE (139 aa)) is coil 2. Positions 269–390 (AEVRAQYEDV…DYQELMNVKL (122 aa)) are necessary for interaction with PNN. The tail stretch occupies residues 407–502 (ESRLESGFQN…SESSDVFSKP (96 aa)). Residues S425, S428, S436, and S444 each carry the phosphoserine modification.

It belongs to the intermediate filament family. Heterotetramer of two type I and two type II keratins. Keratin-8 associates with keratin-18. Expressed in oocytes, eggs, embryos, liver and intestinal mucosa.

The protein resides in the cytoplasm. It localises to the nucleus. It is found in the nucleoplasm. The protein localises to the nucleus matrix. In terms of biological role, together with KRT19, helps to link the contractile apparatus to dystrophin at the costameres of striated muscle. The polypeptide is Keratin, type II cytoskeletal 8 (Xenopus laevis (African clawed frog)).